The sequence spans 256 residues: Triosephosphate isomerase (256 aa).

9–11 serves as a coordination point for substrate; that stretch reads NWK. His-97 (electrophile) is an active-site residue. The active-site Proton acceptor is the Glu-169. Residues Gly-175, Ser-214, and 235-236 each bind substrate; that span reads GG.

The protein belongs to the triosephosphate isomerase family. Homodimer.

The protein localises to the cytoplasm. It carries out the reaction D-glyceraldehyde 3-phosphate = dihydroxyacetone phosphate. Its pathway is carbohydrate biosynthesis; gluconeogenesis. The protein operates within carbohydrate degradation; glycolysis; D-glyceraldehyde 3-phosphate from glycerone phosphate: step 1/1. Its function is as follows. Involved in the gluconeogenesis. Catalyzes stereospecifically the conversion of dihydroxyacetone phosphate (DHAP) to D-glyceraldehyde-3-phosphate (G3P). This is Triosephosphate isomerase from Aliivibrio salmonicida (strain LFI1238) (Vibrio salmonicida (strain LFI1238)).